The primary structure comprises 360 residues: Biotin synthase (360 aa).

A Radical SAM core domain is found at 83 to 315 (FCGKYFDLCT…KSFLRYCGGR (233 aa)). 3 residues coordinate [4Fe-4S] cluster: Cys101, Cys105, and Cys108. Residues Ser145, Cys180, Cys240, and Arg310 each contribute to the [2Fe-2S] cluster site.

The protein belongs to the radical SAM superfamily. Biotin synthase family. In terms of assembly, homodimer. [4Fe-4S] cluster is required as a cofactor. [2Fe-2S] cluster serves as cofactor.

It catalyses the reaction (4R,5S)-dethiobiotin + (sulfur carrier)-SH + 2 reduced [2Fe-2S]-[ferredoxin] + 2 S-adenosyl-L-methionine = (sulfur carrier)-H + biotin + 2 5'-deoxyadenosine + 2 L-methionine + 2 oxidized [2Fe-2S]-[ferredoxin]. It functions in the pathway cofactor biosynthesis; biotin biosynthesis; biotin from 7,8-diaminononanoate: step 2/2. In terms of biological role, catalyzes the conversion of dethiobiotin (DTB) to biotin by the insertion of a sulfur atom into dethiobiotin via a radical-based mechanism. The sequence is that of Biotin synthase from Fusobacterium nucleatum subsp. nucleatum (strain ATCC 25586 / DSM 15643 / BCRC 10681 / CIP 101130 / JCM 8532 / KCTC 2640 / LMG 13131 / VPI 4355).